A 212-amino-acid chain; its full sequence is NAD(P)H-hydrate epimerase (212 aa).

In terms of domain architecture, YjeF N-terminal spans 10 to 212 (MRSLERAAIA…IGVIVKPIGL (203 aa)). 65 to 69 (NNGGD) serves as a coordination point for (6S)-NADPHX. Residues N66 and D129 each coordinate K(+). Residues 133–139 (GLGLTRP) and D161 contribute to the (6S)-NADPHX site. S164 contributes to the K(+) binding site.

This sequence belongs to the NnrE/AIBP family. The cofactor is K(+).

It catalyses the reaction (6R)-NADHX = (6S)-NADHX. It carries out the reaction (6R)-NADPHX = (6S)-NADPHX. Functionally, catalyzes the epimerization of the S- and R-forms of NAD(P)HX, a damaged form of NAD(P)H that is a result of enzymatic or heat-dependent hydration. This is a prerequisite for the S-specific NAD(P)H-hydrate dehydratase to allow the repair of both epimers of NAD(P)HX. This Rhodobacter capsulatus (strain ATCC BAA-309 / NBRC 16581 / SB1003) protein is NAD(P)H-hydrate epimerase.